Here is a 360-residue protein sequence, read N- to C-terminus: Isocitrate dehydrogenase [NAD] regulatory subunit B, mitochondrial (360 aa).

Residues 1 to 113 (MLGRLRTVVK…MELRKALDLY (113 aa)) constitute a mitochondrion transit peptide. Substrate is bound by residues Ser-101, Asn-103, Arg-107, and Arg-140. Mg(2+) is bound at residue Asp-227. Residues 284–290 (HHVAADI) and Asn-297 each bind NADP(+).

It belongs to the isocitrate and isopropylmalate dehydrogenases family. As to quaternary structure, heterooligomer of catalytic and regulatory subunits. It depends on Mg(2+) as a cofactor. Mn(2+) serves as cofactor.

The protein localises to the mitochondrion. The enzyme catalyses D-threo-isocitrate + NAD(+) = 2-oxoglutarate + CO2 + NADH. Performs an essential role in the oxidative function of the citric acid cycle. The protein is Isocitrate dehydrogenase [NAD] regulatory subunit B, mitochondrial (idhB) of Dictyostelium discoideum (Social amoeba).